A 371-amino-acid chain; its full sequence is uncharacterized protein (371 aa).

The EH domain occupies aspartate 43–proline 148. The segment at serine 179–leucine 205 is disordered.

This is an uncharacterized protein from Caenorhabditis elegans.